The following is a 341-amino-acid chain: Two-component response regulator EHD1 (341 aa).

The Response regulatory domain occupies 12–127 (RVLVIDDDCS…ELSNIWQHIF (116 aa)). Asp63 is subject to 4-aspartylphosphate. In terms of domain architecture, HTH myb-type spans 195 to 254 (DLGKSRLTWTTQLHRQFIAAVNHLGEDKAVPKKILGIMKVKHLTREQVASHLQKYRMQLK). The segment at residues 225 to 250 (PKKILGIMKVKHLTREQVASHLQKYR) is a DNA-binding region (H-T-H motif).

Post-translationally, two-component system major event consists of a His-to-Asp phosphorelay between a sensor histidine kinase (HK) and a response regulator (RR). In plants, the His-to-Asp phosphorelay involves an additional intermediate named Histidine-containing phosphotransfer protein (HPt). This multistep phosphorelay consists of a His-Asp-His-Asp sequential transfer of a phosphate group between first a His and an Asp of the HK protein, followed by the transfer to a conserved His of the HPt protein and finally the transfer to an Asp in the receiver domain of the RR protein.

Its subcellular location is the nucleus. Its function is as follows. Transcriptional activator that acts as a floral inducer to promote short-day (SD) flowering pathway. Activates Hd3a and other FT-like genes independently from Hd1. May also activate MADS-box transcription factors involved in flowering regulation. The chain is Two-component response regulator EHD1 (EHD1) from Oryza sativa subsp. indica (Rice).